Consider the following 305-residue polypeptide: Ornithine carbamoyltransferase (305 aa).

Residues 52-55 (STRT), Gln-79, Arg-103, and 130-133 (HPLQ) contribute to the carbamoyl phosphate site. Residues Asn-162, Asp-224, and 228-229 (SM) contribute to the L-ornithine site. Residues 264-265 (CL) and Arg-292 contribute to the carbamoyl phosphate site.

It belongs to the aspartate/ornithine carbamoyltransferase superfamily. OTCase family.

Its subcellular location is the cytoplasm. It catalyses the reaction carbamoyl phosphate + L-ornithine = L-citrulline + phosphate + H(+). It functions in the pathway amino-acid biosynthesis; L-arginine biosynthesis; L-arginine from L-ornithine and carbamoyl phosphate: step 1/3. In terms of biological role, reversibly catalyzes the transfer of the carbamoyl group from carbamoyl phosphate (CP) to the N(epsilon) atom of ornithine (ORN) to produce L-citrulline. The sequence is that of Ornithine carbamoyltransferase from Pyrobaculum aerophilum (strain ATCC 51768 / DSM 7523 / JCM 9630 / CIP 104966 / NBRC 100827 / IM2).